The primary structure comprises 336 residues: MNTEATHDQNEAQTTGVRLRNAREQLGLSQQAVAERLCLKVSTVRDIEEDKAPSDLASTFLRGYIRSYARLVHVPEEELLPGLEKQAPLRAAKVAPMQSFSLGKRRKKRDGWLMSFTWLVLFVVVGLTGAWWWQNHKAQQEEITTMADQSTAELNADKDSGQSVPLDTGAVTSQDTTPAQTAPAPATPVDSTAATQTQTPAPTAAATQNTVVAPSQANVDTAATSAAPAATETPSALPTSQAGVAAPAADPNALVMNFTADCWLEVTDATGKKLFSGMQRKDGNLNLTGQAPYKLKIGAPAAVQIQYQGKPVDLSRFIRTNQVARLTLNAEPTPAQ.

Residues 1-111 lie on the Cytoplasmic side of the membrane; it reads MNTEATHDQN…LGKRRKKRDG (111 aa). In terms of domain architecture, HTH cro/C1-type spans 19–71; that stretch reads LRNAREQLGLSQQAVAERLCLKVSTVRDIEEDKAPSDLASTFLRGYIRSYARL. Positions 30-49 form a DNA-binding region, H-T-H motif; it reads QQAVAERLCLKVSTVRDIEE. A helical; Signal-anchor for type II membrane protein transmembrane segment spans residues 112–132; that stretch reads WLMSFTWLVLFVVVGLTGAWW. The Periplasmic portion of the chain corresponds to 133–336; that stretch reads WQNHKAQQEE…TLNAEPTPAQ (204 aa). The interval 155–243 is disordered; it reads NADKDSGQSV…PSALPTSQAG (89 aa). Polar residues predominate over residues 161–175; it reads GQSVPLDTGAVTSQD. Low complexity-rich tracts occupy residues 176–214 and 221–243; these read TTPA…VVAP and TAAT…SQAG.

This sequence belongs to the RodZ family.

Its subcellular location is the cell inner membrane. Its function is as follows. Cytoskeletal protein that is involved in cell-shape control through regulation of the length of the long axis. This chain is Cytoskeleton protein RodZ, found in Salmonella newport (strain SL254).